A 111-amino-acid polypeptide reads, in one-letter code: Large ribosomal subunit protein P2B (111 aa).

Positions 62–111 are disordered; that stretch reads LASVPSGGAAAGGASASTGAAAGGAAEAEEEKEEEAKEESDDDMGFGLFD. A compositionally biased stretch (low complexity) spans 67-87; sequence SGGAAAGGASASTGAAAGGAA. Over residues 88–105 the composition is skewed to acidic residues; it reads EAEEEKEEEAKEESDDDM. S101 carries the post-translational modification Phosphoserine.

It belongs to the eukaryotic ribosomal protein P1/P2 family.

In terms of biological role, plays an important role in the elongation step of protein synthesis. In Candida albicans (Yeast), this protein is Large ribosomal subunit protein P2B (RPP2B).